The following is a 240-amino-acid chain: MATLFIADLHLCAEEPAITAGFLRFLAGEARKADALYILGDLFEAWIGDDDPNPLHRQMAAAIKAVSDSGVPCYFIHGNRDFLLGKRFARESGMTLLPEEKVLELYGRRVLIMHGDTLCTDDAGYQAFRAKVHKPWLQTLFLALPLFVRKRIAARMRANSKEANSSKSLAIMDVNQNAVVSAMEKHQVQWLIHGHTHRPAVHELIANQQPAFRVVLGAWHTEGSMVKVTADDVELIHFPF.

Mn(2+) contacts are provided by Asp8, His10, Asp41, Asn79, and His114. Asn79–Arg80 is a substrate binding site. Residues Asp122, Ser160, Asn164, Lys167, and His195 each coordinate substrate. Residues His195 and His197 each contribute to the Mn(2+) site.

This sequence belongs to the LpxH family. It depends on Mn(2+) as a cofactor.

Its subcellular location is the cell inner membrane. The catalysed reaction is UDP-2-N,3-O-bis[(3R)-3-hydroxytetradecanoyl]-alpha-D-glucosamine + H2O = 2-N,3-O-bis[(3R)-3-hydroxytetradecanoyl]-alpha-D-glucosaminyl 1-phosphate + UMP + 2 H(+). It functions in the pathway glycolipid biosynthesis; lipid IV(A) biosynthesis; lipid IV(A) from (3R)-3-hydroxytetradecanoyl-[acyl-carrier-protein] and UDP-N-acetyl-alpha-D-glucosamine: step 4/6. Hydrolyzes the pyrophosphate bond of UDP-2,3-diacylglucosamine to yield 2,3-diacylglucosamine 1-phosphate (lipid X) and UMP by catalyzing the attack of water at the alpha-P atom. Involved in the biosynthesis of lipid A, a phosphorylated glycolipid that anchors the lipopolysaccharide to the outer membrane of the cell. This Escherichia coli O17:K52:H18 (strain UMN026 / ExPEC) protein is UDP-2,3-diacylglucosamine hydrolase.